A 303-amino-acid chain; its full sequence is Probable 5-dehydro-4-deoxyglucarate dehydratase (303 aa).

It belongs to the DapA family.

The enzyme catalyses 5-dehydro-4-deoxy-D-glucarate + H(+) = 2,5-dioxopentanoate + CO2 + H2O. Its pathway is carbohydrate acid metabolism; D-glucarate degradation; 2,5-dioxopentanoate from D-glucarate: step 2/2. In Variovorax paradoxus (strain S110), this protein is Probable 5-dehydro-4-deoxyglucarate dehydratase.